A 141-amino-acid chain; its full sequence is Large ribosomal subunit protein uL16c (141 aa).

The span at 1–17 (MLSPRRTKYRKQHRGRL) shows a compositional bias: basic residues. Residues 1–20 (MLSPRRTKYRKQHRGRLKGT) are disordered.

This sequence belongs to the universal ribosomal protein uL16 family. In terms of assembly, part of the 50S ribosomal subunit.

It is found in the plastid. It localises to the chloroplast. In Staurastrum punctulatum (Green alga), this protein is Large ribosomal subunit protein uL16c.